Reading from the N-terminus, the 107-residue chain is Snaclec VP12 subunit A (107 aa).

Disulfide bonds link cysteine 4–cysteine 15 and cysteine 32–cysteine 107. One can recognise a C-type lectin domain in the interval 11 to 107 (YEGNCYKAFD…ECGLAYPFIC (97 aa)).

It belongs to the snaclec family. In terms of assembly, heterodimer of subunits alpha and beta; disulfide-linked. As to expression, expressed by the venom gland.

The protein localises to the secreted. Inhibits integrin alpha-2/beta-1- (ITGA2/ITGB1) dependent melanoma metastasis. The chain is Snaclec VP12 subunit A from Daboia palaestinae (Palestine viper).